Reading from the N-terminus, the 264-residue chain is Undecaprenyl-diphosphatase (264 aa).

7 helical membrane-spanning segments follow: residues 42–62, 82–102, 109–129, 146–166, 184–204, 215–235, and 243–263; these read ESLL…LVVF, TQFS…GLLF, LFGG…LLLW, AFII…RSGA, FSFL…LMSG, ILAT…TWMI, and LSWF…FAYA.

This sequence belongs to the UppP family.

It localises to the cell membrane. The catalysed reaction is di-trans,octa-cis-undecaprenyl diphosphate + H2O = di-trans,octa-cis-undecaprenyl phosphate + phosphate + H(+). Functionally, catalyzes the dephosphorylation of undecaprenyl diphosphate (UPP). Confers resistance to bacitracin. The polypeptide is Undecaprenyl-diphosphatase (Christiangramia forsetii (strain DSM 17595 / CGMCC 1.15422 / KT0803) (Gramella forsetii)).